We begin with the raw amino-acid sequence, 351 residues long: S-adenosylmethionine:tRNA ribosyltransferase-isomerase (351 aa).

Belongs to the QueA family. As to quaternary structure, monomer.

The protein resides in the cytoplasm. It catalyses the reaction 7-aminomethyl-7-carbaguanosine(34) in tRNA + S-adenosyl-L-methionine = epoxyqueuosine(34) in tRNA + adenine + L-methionine + 2 H(+). It participates in tRNA modification; tRNA-queuosine biosynthesis. Functionally, transfers and isomerizes the ribose moiety from AdoMet to the 7-aminomethyl group of 7-deazaguanine (preQ1-tRNA) to give epoxyqueuosine (oQ-tRNA). This chain is S-adenosylmethionine:tRNA ribosyltransferase-isomerase, found in Fusobacterium nucleatum subsp. nucleatum (strain ATCC 25586 / DSM 15643 / BCRC 10681 / CIP 101130 / JCM 8532 / KCTC 2640 / LMG 13131 / VPI 4355).